A 156-amino-acid chain; its full sequence is Small ribosomal subunit protein uS7 (156 aa).

The protein belongs to the universal ribosomal protein uS7 family. In terms of assembly, part of the 30S ribosomal subunit. Contacts proteins S9 and S11.

One of the primary rRNA binding proteins, it binds directly to 16S rRNA where it nucleates assembly of the head domain of the 30S subunit. Is located at the subunit interface close to the decoding center, probably blocks exit of the E-site tRNA. This chain is Small ribosomal subunit protein uS7, found in Caldanaerobacter subterraneus subsp. tengcongensis (strain DSM 15242 / JCM 11007 / NBRC 100824 / MB4) (Thermoanaerobacter tengcongensis).